Consider the following 422-residue polypeptide: Proline--tRNA ligase (422 aa).

The protein belongs to the class-II aminoacyl-tRNA synthetase family. ProS type 2 subfamily. In terms of assembly, homodimer.

The protein localises to the cytoplasm. The enzyme catalyses tRNA(Pro) + L-proline + ATP = L-prolyl-tRNA(Pro) + AMP + diphosphate. In terms of biological role, catalyzes the attachment of proline to tRNA(Pro) in a two-step reaction: proline is first activated by ATP to form Pro-AMP and then transferred to the acceptor end of tRNA(Pro). The polypeptide is Proline--tRNA ligase (Wolbachia pipientis wMel).